The following is a 248-amino-acid chain: Inhibitor of growth protein 4 (248 aa).

A coiled-coil region spans residues phenylalanine 25–serine 118. Residues lysine 112, lysine 127, and lysine 129 each carry the N6-acetyllysine modification. Positions glutamine 115–lysine 160 are disordered. The Bipartite nuclear localization signal motif lies at lysine 127–lysine 147. Arginine 132 is modified (citrulline). 3 positions are modified to N6-acetyllysine: lysine 145, lysine 147, and lysine 155. Residue arginine 165 is modified to Citrulline. The PHD-type zinc-finger motif lies at proline 195–glutamate 244. Positions 198, 200, 211, 216, 222, 225, 238, and 241 each coordinate Zn(2+).

Belongs to the ING family. Homodimer. Component of the HBO1 complex composed of KAT7/HBO1, MEAF6, ING4 or ING5, and one scaffold subunit: complexes containing BRPF scaffold (BRPF1, BRD1/BRPF2 or BRPF3) direct KAT7/HBO1 specificity towards H3K14ac, while complexes containing JADE scaffold (JADE1, JADE2 and JADE3) mediate acetylation of histone H4. Interacts with H3K4me3 and to a lesser extent with H3K4me2, the interaction augments KAT7/HBO1 acetylation activity on H3 tails. Interacts with EP300, RELA and TP53; these interactions may be indirect. Interacts with EGLN1. Interacts with BCL2A1. Post-translationally, citrullination by PADI4 within the nuclear localization signal disrupts the interaction with p53 and increases susceptibility to degradation.

Its subcellular location is the nucleus. Its function is as follows. Component of HBO1 complexes, which specifically mediate acetylation of histone H3 at 'Lys-14' (H3K14ac), and have reduced activity toward histone H4. Through chromatin acetylation it may function in DNA replication. May inhibit tumor progression by modulating the transcriptional output of signaling pathways which regulate cell proliferation. Can suppress brain tumor angiogenesis through transcriptional repression of RELA/NFKB3 target genes when complexed with RELA. May also specifically suppress loss of contact inhibition elicited by activated oncogenes such as MYC. Represses hypoxia inducible factor's (HIF) activity by interacting with HIF prolyl hydroxylase 2 (EGLN1). Can enhance apoptosis induced by serum starvation in mammary epithelial cell line HC11. The protein is Inhibitor of growth protein 4 (ING4) of Bos taurus (Bovine).